Reading from the N-terminus, the 640-residue chain is Chaperone protein HtpG (640 aa).

Residues 1–348 (MAQYKFETEV…SEDLPLNVSR (348 aa)) form an a; substrate-binding region. The interval 349–565 (EILQQNRILS…ETDPSLQMER (217 aa)) is b. The interval 566–640 (MMRAMGQFNT…RLNRLMTNLK (75 aa)) is c.

Belongs to the heat shock protein 90 family. As to quaternary structure, homodimer.

It localises to the cytoplasm. Its function is as follows. Molecular chaperone. Has ATPase activity. This is Chaperone protein HtpG from Treponema denticola (strain ATCC 35405 / DSM 14222 / CIP 103919 / JCM 8153 / KCTC 15104).